The following is a 242-amino-acid chain: Ribosomal RNA small subunit methyltransferase G (242 aa).

Residues Gly-82, Phe-87, 133–134 (AE), and Arg-152 contribute to the S-adenosyl-L-methionine site.

It belongs to the methyltransferase superfamily. RNA methyltransferase RsmG family.

It localises to the cytoplasm. Specifically methylates the N7 position of a guanine in 16S rRNA. This Acetivibrio thermocellus (strain ATCC 27405 / DSM 1237 / JCM 9322 / NBRC 103400 / NCIMB 10682 / NRRL B-4536 / VPI 7372) (Clostridium thermocellum) protein is Ribosomal RNA small subunit methyltransferase G.